An 876-amino-acid chain; its full sequence is ATPase WRNIP1 (876 aa).

Low complexity-rich tracts occupy residues N56–K85 and N104–N175. The disordered stretch occupies residues N56 to N175. P240 to T246 is an ATP binding site. Disordered regions lie at residues K621–Q647, I714–T737, and E833–F876. 2 stretches are compositionally biased toward low complexity: residues S626 to Q647 and I714 to S731. Over residues K835–N849 the composition is skewed to polar residues. The segment covering D850–Q863 has biased composition (basic and acidic residues).

The protein belongs to the AAA ATPase family. RarA/MGS1/WRNIP1 subfamily.

The protein resides in the nucleus. The catalysed reaction is ATP + H2O = ADP + phosphate + H(+). Its function is as follows. Functions as a modulator for initiation or reinitiation events during DNA polymerase delta-mediated DNA synthesis. Has an intrinsic ATPase activity that functions as a sensor of DNA damage or of arrested replication forks and regulates the extent of DNA synthesis. The protein is ATPase WRNIP1 of Dictyostelium discoideum (Social amoeba).